The following is a 410-amino-acid chain: Histidine--tRNA ligase (410 aa).

Belongs to the class-II aminoacyl-tRNA synthetase family.

The protein resides in the cytoplasm. The catalysed reaction is tRNA(His) + L-histidine + ATP = L-histidyl-tRNA(His) + AMP + diphosphate + H(+). The polypeptide is Histidine--tRNA ligase (Methanoculleus marisnigri (strain ATCC 35101 / DSM 1498 / JR1)).